The primary structure comprises 548 residues: CTP synthase (548 aa).

The amidoligase domain stretch occupies residues 1–266; it reads MRVNYIFVTG…DNYICKRFNL (266 aa). Ser-14 serves as a coordination point for CTP. Ser-14 contacts UTP. ATP contacts are provided by residues 15-20 and Asp-72; that span reads SLGKGI. Mg(2+) is bound by residues Asp-72 and Glu-140. Residues 147-149, 187-192, and Lys-223 each bind CTP; these read DIE and KTKPTQ. Residues 187-192 and Lys-223 contribute to the UTP site; that span reads KTKPTQ. The region spanning 291–543 is the Glutamine amidotransferase type-1 domain; sequence TVGMVGKYIE…IKAAIEYQHR (253 aa). Residue Gly-353 coordinates L-glutamine. The active-site Nucleophile; for glutamine hydrolysis is the Cys-380. L-glutamine-binding positions include 381-384, Glu-404, and Arg-471; that span reads LGMQ. Active-site residues include His-516 and Glu-518.

The protein belongs to the CTP synthase family. Homotetramer.

The catalysed reaction is UTP + L-glutamine + ATP + H2O = CTP + L-glutamate + ADP + phosphate + 2 H(+). It catalyses the reaction L-glutamine + H2O = L-glutamate + NH4(+). The enzyme catalyses UTP + NH4(+) + ATP = CTP + ADP + phosphate + 2 H(+). Its pathway is pyrimidine metabolism; CTP biosynthesis via de novo pathway; CTP from UDP: step 2/2. With respect to regulation, allosterically activated by GTP, when glutamine is the substrate; GTP has no effect on the reaction when ammonia is the substrate. The allosteric effector GTP functions by stabilizing the protein conformation that binds the tetrahedral intermediate(s) formed during glutamine hydrolysis. Inhibited by the product CTP, via allosteric rather than competitive inhibition. Its function is as follows. Catalyzes the ATP-dependent amination of UTP to CTP with either L-glutamine or ammonia as the source of nitrogen. Regulates intracellular CTP levels through interactions with the four ribonucleotide triphosphates. This Blochmanniella pennsylvanica (strain BPEN) protein is CTP synthase.